Here is a 127-residue protein sequence, read N- to C-terminus: UPF0166 protein PH1503 (127 aa).

Belongs to the UPF0166 family.

The polypeptide is UPF0166 protein PH1503 (Pyrococcus horikoshii (strain ATCC 700860 / DSM 12428 / JCM 9974 / NBRC 100139 / OT-3)).